We begin with the raw amino-acid sequence, 492 residues long: Acetyl-coenzyme A carboxylase carboxyl transferase subunit beta, chloroplastic (492 aa).

Residues 198 to 219 (STNGSDLTISESSNESESSNES) are disordered. One can recognise a CoA carboxyltransferase N-terminal domain in the interval 228–492 (LWVQCENCYG…FHGRFPLNQN (265 aa)). Zn(2+)-binding residues include Cys232, Cys235, Cys251, and Cys254. The C4-type zinc-finger motif lies at 232–254 (CENCYGLNYKKFLKSKMYLCEQC).

Belongs to the AccD/PCCB family. As to quaternary structure, acetyl-CoA carboxylase is a heterohexamer composed of biotin carboxyl carrier protein, biotin carboxylase and 2 subunits each of ACCase subunit alpha and ACCase plastid-coded subunit beta (accD). It depends on Zn(2+) as a cofactor.

The protein resides in the plastid. It localises to the chloroplast stroma. The catalysed reaction is N(6)-carboxybiotinyl-L-lysyl-[protein] + acetyl-CoA = N(6)-biotinyl-L-lysyl-[protein] + malonyl-CoA. It functions in the pathway lipid metabolism; malonyl-CoA biosynthesis; malonyl-CoA from acetyl-CoA: step 1/1. Its function is as follows. Component of the acetyl coenzyme A carboxylase (ACC) complex. Biotin carboxylase (BC) catalyzes the carboxylation of biotin on its carrier protein (BCCP) and then the CO(2) group is transferred by the transcarboxylase to acetyl-CoA to form malonyl-CoA. This is Acetyl-coenzyme A carboxylase carboxyl transferase subunit beta, chloroplastic from Citrus sinensis (Sweet orange).